A 299-amino-acid chain; its full sequence is Hairy/enhancer-of-split related with YRPW motif protein 1 (299 aa).

The interval 1-53 (MKRAHPDYSSSDSELDETIEVEKESADENGNLSSALCSMSPTTSSQVLARKRR) is disordered. The segment covering 28–47 (ENGNLSSALCSMSPTTSSQV) has biased composition (polar residues). A transcriptional repression and interaction with NCOR1 and SIN3A region spans residues 48–117 (LARKRRRGII…GGKGYFDAHA (70 aa)). A bHLH domain is found at 49-104 (ARKRRRGIIEKRRRDRINNSLSELRRLVPSAFEKQGSAKLEKAEILQMTVDHLKML). The region spanning 122-158 (YRSLGFRECLAEVARYLSIIEGLDASDPLLVRLVSHL) is the Orange domain. Residues 194-234 (LLLPQNGHGNAGTAASPTEPHHQGRLASAHPEAPALRAPPS) are disordered. The short motif at 289 to 292 (YRPW) is the YRPW motif element.

The protein belongs to the HEY family. May self-associate. Interacts with HES1, NCOR1 and SIN3A. Interacts with GATA4, GATA6 and HDAC1 and HEYL. Interacts with CCDC89/BOIP. In terms of tissue distribution, expressed in somitic mesoderm, brain, central nervous system, kidney, heart, nasal epithelium, limbs, lung, muscle, ovary and testis.

It localises to the nucleus. Functionally, transcriptional repressor which binds preferentially to the canonical E box sequence 5'-CACGTG-3'. Downstream effector of Notch signaling required for cardiovascular development. Specifically required for the Notch-induced endocardial epithelial to mesenchymal transition, which is itself criticial for cardiac valve and septum development. May be required in conjunction with HEY2 to specify arterial cell fate or identity. Promotes maintenance of neuronal precursor cells and glial versus neuronal fate specification. Represses transcription by the cardiac transcriptional activators GATA4 and GATA6 and by the neuronal bHLH factors ASCL1/MASH1 and NEUROD4/MATH3. This is Hairy/enhancer-of-split related with YRPW motif protein 1 (Hey1) from Mus musculus (Mouse).